The chain runs to 401 residues: Tryptophan synthase beta chain (401 aa).

Lysine 91 is subject to N6-(pyridoxal phosphate)lysine.

This sequence belongs to the TrpB family. Tetramer of two alpha and two beta chains. It depends on pyridoxal 5'-phosphate as a cofactor.

The enzyme catalyses (1S,2R)-1-C-(indol-3-yl)glycerol 3-phosphate + L-serine = D-glyceraldehyde 3-phosphate + L-tryptophan + H2O. The protein operates within amino-acid biosynthesis; L-tryptophan biosynthesis; L-tryptophan from chorismate: step 5/5. The beta subunit is responsible for the synthesis of L-tryptophan from indole and L-serine. This is Tryptophan synthase beta chain from Lactococcus lactis subsp. cremoris (strain SK11).